Consider the following 123-residue polypeptide: Large ribosomal subunit protein bL12 (123 aa).

It belongs to the bacterial ribosomal protein bL12 family. In terms of assembly, homodimer. Part of the ribosomal stalk of the 50S ribosomal subunit. Forms a multimeric L10(L12)X complex, where L10 forms an elongated spine to which 2 to 4 L12 dimers bind in a sequential fashion. Binds GTP-bound translation factors.

Forms part of the ribosomal stalk which helps the ribosome interact with GTP-bound translation factors. Is thus essential for accurate translation. The protein is Large ribosomal subunit protein bL12 of Rhodopseudomonas palustris (strain HaA2).